The sequence spans 77 residues: Acyl carrier protein (77 aa).

Positions 1-76 (MSLEDDVKAI…DVIKYIQEHQ (76 aa)) constitute a Carrier domain. An O-(pantetheine 4'-phosphoryl)serine modification is found at serine 36.

It belongs to the acyl carrier protein (ACP) family. 4'-phosphopantetheine is transferred from CoA to a specific serine of apo-ACP by AcpS. This modification is essential for activity because fatty acids are bound in thioester linkage to the sulfhydryl of the prosthetic group.

It is found in the cytoplasm. It functions in the pathway lipid metabolism; fatty acid biosynthesis. Functionally, carrier of the growing fatty acid chain in fatty acid biosynthesis. This is Acyl carrier protein from Chlamydia trachomatis serovar L2 (strain ATCC VR-902B / DSM 19102 / 434/Bu).